A 159-amino-acid chain; its full sequence is Transcription antitermination protein NusB (159 aa).

This sequence belongs to the NusB family.

Involved in transcription antitermination. Required for transcription of ribosomal RNA (rRNA) genes. Binds specifically to the boxA antiterminator sequence of the ribosomal RNA (rrn) operons. This Stenotrophomonas maltophilia (strain K279a) protein is Transcription antitermination protein NusB.